The chain runs to 290 residues: MLVRNRYLGELLKNSRSFSVLNSSVRSGHNKWSTIKHGKAKNDAERNKINNKFANQIAMSVKLGNGITDPSMNIRLATSIELANKNNVSKKVIENAIRKASGSSASGKDSNASELCVYEGMGPGGVAIVVEALTDNKNRTIGLIRSAFNKANGSMTPTLFFFDKKGYVTMVPPKMLDTEDKVLESVLEIQGIEDIAPVQEDAEDLECDTETETTGQTYEAVMEPADTNKVAALLKERGFHIRDLGIGYNAKPDMEVFVQGDETLEKLQKLTTALEDIDEVTSLYTNASNA.

It belongs to the TACO1 family.

The protein resides in the mitochondrion. The sequence is that of Probable transcriptional regulatory protein HAH1 from Saccharomyces cerevisiae (strain ATCC 204508 / S288c) (Baker's yeast).